The sequence spans 916 residues: Protein translocase subunit SecA (916 aa).

Residues Q87, 105-109 (GEGKT), and D512 each bind ATP. The disordered stretch occupies residues 857–916 (QHAEAPSMEQAVAGEEEELPEGPAPVVPLEPVRNEQKIGRNEPCPCGSGKKYKHCHGQLD). C900, C902, C911, and H912 together coordinate Zn(2+). A compositionally biased stretch (basic residues) spans 906–916 (KKYKHCHGQLD).

This sequence belongs to the SecA family. As to quaternary structure, monomer and homodimer. Part of the essential Sec protein translocation apparatus which comprises SecA, SecYEG and auxiliary proteins SecDF-YajC and YidC. Zn(2+) serves as cofactor.

Its subcellular location is the cell inner membrane. It is found in the cytoplasm. The catalysed reaction is ATP + H2O + cellular proteinSide 1 = ADP + phosphate + cellular proteinSide 2.. Functionally, part of the Sec protein translocase complex. Interacts with the SecYEG preprotein conducting channel. Has a central role in coupling the hydrolysis of ATP to the transfer of proteins into and across the cell membrane, serving both as a receptor for the preprotein-SecB complex and as an ATP-driven molecular motor driving the stepwise translocation of polypeptide chains across the membrane. This Pseudomonas aeruginosa (strain LESB58) protein is Protein translocase subunit SecA.